A 291-amino-acid polypeptide reads, in one-letter code: Pantothenate synthetase (291 aa).

ATP is bound at residue 30 to 37; that stretch reads MGALHAGH. Residue histidine 37 is the Proton donor of the active site. Glutamine 61 contacts (R)-pantoate. Residue glutamine 61 participates in beta-alanine binding. 147–150 contributes to the ATP binding site; that stretch reads GQKD. Position 153 (glutamine 153) interacts with (R)-pantoate. ATP-binding positions include valine 176 and 184-187; that span reads LSSR.

Belongs to the pantothenate synthetase family. In terms of assembly, homodimer.

It localises to the cytoplasm. It carries out the reaction (R)-pantoate + beta-alanine + ATP = (R)-pantothenate + AMP + diphosphate + H(+). It participates in cofactor biosynthesis; (R)-pantothenate biosynthesis; (R)-pantothenate from (R)-pantoate and beta-alanine: step 1/1. In terms of biological role, catalyzes the condensation of pantoate with beta-alanine in an ATP-dependent reaction via a pantoyl-adenylate intermediate. This Koribacter versatilis (strain Ellin345) protein is Pantothenate synthetase.